We begin with the raw amino-acid sequence, 399 residues long: Calsequestrin-2 (399 aa).

Positions 1-19 (MKRTHLFIVGIYFLSSCRA) are cleaved as a signal peptide. Residue Y282 is modified to Phosphotyrosine. N-linked (GlcNAc...) asparagine glycosylation is present at N335. The interval 365–399 (VLSGKINTEDDDEDDDDDDNSDEEDNDDSDDDDDE) is disordered. The segment covering 373 to 399 (EDDDEDDDDDDNSDEEDNDDSDDDDDE) has biased composition (acidic residues). A phosphoserine mark is found at S385 and S393.

This sequence belongs to the calsequestrin family. Monomer, homodimer and homooligomer. Mostly monomeric in the absence of calcium. Forms higher oligomers in a calcium-dependent manner. Dimers associate to form tetramers, that then form linear homomer chains. Interacts with ASPH and TRDN. Phosphorylation in the C-terminus, probably by CK2, moderately increases calcium buffering capacity. In terms of processing, N-glycosylated.

It localises to the sarcoplasmic reticulum lumen. Its function is as follows. Calsequestrin is a high-capacity, moderate affinity, calcium-binding protein and thus acts as an internal calcium store in muscle. Calcium ions are bound by clusters of acidic residues at the protein surface, especially at the interface between subunits. Can bind around 60 Ca(2+) ions. Regulates the release of lumenal Ca(2+) via the calcium release channel RYR2; this plays an important role in triggering muscle contraction. Plays a role in excitation-contraction coupling in the heart and in regulating the rate of heart beats. This Homo sapiens (Human) protein is Calsequestrin-2 (CASQ2).